Consider the following 308-residue polypeptide: tRNA dimethylallyltransferase (308 aa).

8–15 (GATAVGKT) serves as a coordination point for ATP. Substrate is bound at residue 10 to 15 (TAVGKT). The interval 33 to 36 (DSRQ) is interaction with substrate tRNA.

The protein belongs to the IPP transferase family. In terms of assembly, monomer. The cofactor is Mg(2+).

The enzyme catalyses adenosine(37) in tRNA + dimethylallyl diphosphate = N(6)-dimethylallyladenosine(37) in tRNA + diphosphate. Its function is as follows. Catalyzes the transfer of a dimethylallyl group onto the adenine at position 37 in tRNAs that read codons beginning with uridine, leading to the formation of N6-(dimethylallyl)adenosine (i(6)A). The protein is tRNA dimethylallyltransferase of Kosmotoga olearia (strain ATCC BAA-1733 / DSM 21960 / TBF 19.5.1).